The chain runs to 637 residues: Chaperone protein HtpG (637 aa).

The a; substrate-binding stretch occupies residues 1–338 (MTSTIDKNGA…SADLPLNISR (338 aa)). The tract at residues 339–552 (EMIQESPILA…ESGPDRQLEK (214 aa)) is b. The segment at 553-637 (ILLGVGQLAG…LRRSSAGGGD (85 aa)) is c.

This sequence belongs to the heat shock protein 90 family. Homodimer.

The protein resides in the cytoplasm. Molecular chaperone. Has ATPase activity. This Nitrobacter winogradskyi (strain ATCC 25391 / DSM 10237 / CIP 104748 / NCIMB 11846 / Nb-255) protein is Chaperone protein HtpG.